We begin with the raw amino-acid sequence, 126 residues long: Fluoride-specific ion channel FluC (126 aa).

The next 4 membrane-spanning stretches (helical) occupy residues 4-24 (YLYI…VSGV), 35-55 (IGTF…TGLF), 67-87 (LLIL…MFES), and 100-120 (ALNI…GLAL). The Na(+) site is built by glycine 75 and threonine 78.

It belongs to the fluoride channel Fluc/FEX (TC 1.A.43) family.

Its subcellular location is the cell inner membrane. The enzyme catalyses fluoride(in) = fluoride(out). Its activity is regulated as follows. Na(+) is not transported, but it plays an essential structural role and its presence is essential for fluoride channel function. Its function is as follows. Fluoride-specific ion channel. Important for reducing fluoride concentration in the cell, thus reducing its toxicity. This is Fluoride-specific ion channel FluC from Maridesulfovibrio salexigens (strain ATCC 14822 / DSM 2638 / NCIMB 8403 / VKM B-1763) (Desulfovibrio salexigens).